The sequence spans 355 residues: D-alanine--D-alanine ligase (355 aa).

The 208-residue stretch at 143 to 350 (KKIFSHLEIP…IDQLVAKLVD (208 aa)) folds into the ATP-grasp domain. 178–233 (IEKLKLPVFVKPANSGSSLGISKAKTRSEIIKALQKAWEIDSRIVIEEGLDVRELE) contributes to the ATP binding site. The Mg(2+) site is built by Asp303, Glu317, and Asn319.

Belongs to the D-alanine--D-alanine ligase family. It depends on Mg(2+) as a cofactor. Mn(2+) is required as a cofactor.

It is found in the cytoplasm. The catalysed reaction is 2 D-alanine + ATP = D-alanyl-D-alanine + ADP + phosphate + H(+). It participates in cell wall biogenesis; peptidoglycan biosynthesis. In terms of biological role, cell wall formation. The polypeptide is D-alanine--D-alanine ligase (Prochlorococcus marinus subsp. pastoris (strain CCMP1986 / NIES-2087 / MED4)).